Reading from the N-terminus, the 65-residue chain is Large ribosomal subunit protein bL35 (65 aa).

The segment at M1–Q26 is disordered.

Belongs to the bacterial ribosomal protein bL35 family.

This chain is Large ribosomal subunit protein bL35, found in Oenococcus oeni (strain ATCC BAA-331 / PSU-1).